A 108-amino-acid polypeptide reads, in one-letter code: Cyclin-dependent protein kinase inhibitor SMR13 (108 aa).

In terms of biological role, probable cyclin-dependent protein kinase (CDK) inhibitor that functions as a repressor of mitosis in the endoreduplication cell cycle. This chain is Cyclin-dependent protein kinase inhibitor SMR13, found in Arabidopsis thaliana (Mouse-ear cress).